Reading from the N-terminus, the 500-residue chain is MTEQTQDENKLIAERRAKLDHVRASCPANGHPNNFDRKHKAADIQAEYGQYSKEELEEMNVQRSIAGRIMAKRGPFLVIQDVSGRIQAYAGKDVQKDLKAKYQGLDIGDIIGVTGQLHLSGKGDLYVNMEEYQLLTKALRPLPEKFHGLTDQETRYRQRYVDLIVNEESRAAFIMRSKVVTAIRNFMVSKEFMEVETPMMHSIPGGASARPFITHHNALDIEMYLRIAPELYLKRLVVGGFERVFEINRNFRNEGLSPRHNPEFTMMEFYMAYADYKDLMDLTEEMLSSIAKDLLGDTKLPYGEHTIDFGGPYERLSMLDAIKKYNPDNETIQSMTYEEVKDVEFMRNLAKSLGMTIEKFWTCGQLLEEIFGETAEPKLMQPTFITGYPADISPLARRNDENHFITDRFEFFIGGREVANGFSELNDAEDQDKRFKAQVDAKDAGDDEAMFYDADYITALEHGLPPTAGQGIGIDRLVMLFTNTHTIRDVILFPAMRPQG.

The Mg(2+) site is built by Glu-410 and Glu-417.

Belongs to the class-II aminoacyl-tRNA synthetase family. Homodimer. Requires Mg(2+) as cofactor.

The protein localises to the cytoplasm. The catalysed reaction is tRNA(Lys) + L-lysine + ATP = L-lysyl-tRNA(Lys) + AMP + diphosphate. This is Lysine--tRNA ligase from Shewanella loihica (strain ATCC BAA-1088 / PV-4).